We begin with the raw amino-acid sequence, 1083 residues long: Error-prone DNA polymerase (1083 aa).

The protein belongs to the DNA polymerase type-C family. DnaE2 subfamily.

Its subcellular location is the cytoplasm. It carries out the reaction DNA(n) + a 2'-deoxyribonucleoside 5'-triphosphate = DNA(n+1) + diphosphate. DNA polymerase involved in damage-induced mutagenesis and translesion synthesis (TLS). It is not the major replicative DNA polymerase. The sequence is that of Error-prone DNA polymerase from Xanthomonas oryzae pv. oryzae (strain KACC10331 / KXO85).